The primary structure comprises 373 residues: Heterogeneous nuclear ribonucleoprotein A3 homolog 1 (373 aa).

The interval 1–25 is disordered; the sequence is MPRGGMDDHWPSSDDQGHDPKEPEQ. 2 consecutive RRM domains span residues 27–110 and 118–206; these read RKLF…DSAR and KKIF…SAQR. 2 disordered regions span residues 196–218 and 319–373; these read KQEM…FMGR and DFGN…GRRF. Residues 207–218 are compositionally biased toward gly residues; it reads GRGGGGSNFMGR. Low complexity predominate over residues 319 to 333; the sequence is DFGNYGGQQQSNYGP. Residues 334–373 show a composition bias toward gly residues; sequence MKGGSFSGRSSGGSGSGPYGGGYGSGGGGGGGGSYGGRRF.

Its subcellular location is the nucleus. This Xenopus laevis (African clawed frog) protein is Heterogeneous nuclear ribonucleoprotein A3 homolog 1.